A 126-amino-acid chain; its full sequence is Large ribosomal subunit protein bL17 (126 aa).

This sequence belongs to the bacterial ribosomal protein bL17 family. As to quaternary structure, part of the 50S ribosomal subunit. Contacts protein L32.

This is Large ribosomal subunit protein bL17 from Vibrio atlanticus (strain LGP32) (Vibrio splendidus (strain Mel32)).